The chain runs to 322 residues: N-acetyl-gamma-glutamyl-phosphate reductase (322 aa).

Cys-132 is a catalytic residue.

This sequence belongs to the NAGSA dehydrogenase family. Type 1 subfamily.

Its subcellular location is the cytoplasm. The enzyme catalyses N-acetyl-L-glutamate 5-semialdehyde + phosphate + NADP(+) = N-acetyl-L-glutamyl 5-phosphate + NADPH + H(+). The protein operates within amino-acid biosynthesis; L-arginine biosynthesis; N(2)-acetyl-L-ornithine from L-glutamate: step 3/4. Its function is as follows. Catalyzes the NADPH-dependent reduction of N-acetyl-5-glutamyl phosphate to yield N-acetyl-L-glutamate 5-semialdehyde. The chain is N-acetyl-gamma-glutamyl-phosphate reductase from Bacteroides fragilis (strain YCH46).